The sequence spans 360 residues: Lactosylceramide 4-alpha-galactosyltransferase (360 aa).

At 1 to 30 (MGISRSDLEETMSKPPDCLPRMLRGTPRQR) the chain is on the cytoplasmic side. Residues 31-51 (VFTLFIISFKFTFLVSILIYW) form a helical; Signal-anchor for type II membrane protein membrane-spanning segment. The Lumenal portion of the chain corresponds to 52-360 (HTVGAPKDQR…TTHRAMTMYL (309 aa)). A DXD motif motif is present at residues 199-201 (DTD). N-linked (GlcNAc...) asparagine glycans are attached at residues N210 and N316.

Belongs to the glycosyltransferase 32 family. As to expression, ubiquitous. Highly expressed in kidney, mesenteric lymph node, spleen and brain.

It is found in the golgi apparatus membrane. It carries out the reaction a beta-D-Gal-(1-&gt;4)-beta-D-Glc-(1&lt;-&gt;1)-Cer(d18:1(4E)) + UDP-alpha-D-galactose = a globoside Gb3Cer (d18:1(4E)) + UDP + H(+). The enzyme catalyses a beta-D-Gal-(1&lt;-&gt;1')-ceramide + UDP-alpha-D-galactose = alpha-D-Gal-(1-&gt;4)-beta-D-Gal-(1&lt;-&gt;1')-Cer + UDP + H(+). The protein operates within glycolipid biosynthesis. Its function is as follows. Catalyzes the transfer of galactose from UDP-alpha-D-galactose to lactosylceramide/beta-D-galactosyl-(1-&gt;4)-beta-D-glucosyl-(1&lt;-&gt;1)-ceramide(d18:1(4E)) to produce globotriaosylceramide/globoside Gb3Cer (d18:1(4E)). Also able to transfer galactose to galactosylceramide/beta-D-Gal-(1&lt;-&gt;1')-Cer. Globoside Gb3Cer is a glycosphingolipid of the globo serie, one of the major types of neutral root structures of glycosphingolipids, that constitute a significant portion of mammalian cell membranes. The polypeptide is Lactosylceramide 4-alpha-galactosyltransferase (Rattus norvegicus (Rat)).